The primary structure comprises 365 residues: Alanine racemase (365 aa).

The active-site Proton acceptor; specific for D-alanine is the Lys32. The residue at position 32 (Lys32) is an N6-(pyridoxal phosphate)lysine. Arg128 contacts substrate. Tyr257 (proton acceptor; specific for L-alanine) is an active-site residue. Residue Met305 participates in substrate binding.

This sequence belongs to the alanine racemase family. The cofactor is pyridoxal 5'-phosphate.

The enzyme catalyses L-alanine = D-alanine. It functions in the pathway amino-acid biosynthesis; D-alanine biosynthesis; D-alanine from L-alanine: step 1/1. Catalyzes the interconversion of L-alanine and D-alanine. May also act on other amino acids. This is Alanine racemase (alr) from Francisella tularensis subsp. mediasiatica (strain FSC147).